The chain runs to 345 residues: Molybdopterin synthase catalytic subunit (345 aa).

Residues 101 to 102, Lys-117, and 124 to 126 each bind substrate; these read HR and KKE.

It belongs to the MoaE family. MOCS2B subfamily. In terms of assembly, heterotetramer; composed of 2 small (Mocs2A) and 2 large (Mocs2B) subunits.

It is found in the cytoplasm. It carries out the reaction 2 [molybdopterin-synthase sulfur-carrier protein]-C-terminal-Gly-aminoethanethioate + cyclic pyranopterin phosphate + H2O = molybdopterin + 2 [molybdopterin-synthase sulfur-carrier protein]-C-terminal Gly-Gly + 2 H(+). The protein operates within cofactor biosynthesis; molybdopterin biosynthesis. In terms of biological role, catalytic subunit of the molybdopterin synthase complex, a complex that catalyzes the conversion of precursor Z into molybdopterin. Acts by mediating the incorporation of 2 sulfur atoms from thiocarboxylated Mocs2A into precursor Z to generate a dithiolene group. The polypeptide is Molybdopterin synthase catalytic subunit (Drosophila virilis (Fruit fly)).